Consider the following 66-residue polypeptide: Large ribosomal subunit protein bL33c (66 aa).

This sequence belongs to the bacterial ribosomal protein bL33 family.

Its subcellular location is the plastid. The protein resides in the chloroplast. The polypeptide is Large ribosomal subunit protein bL33c (Cycas taitungensis (Prince sago)).